Here is a 339-residue protein sequence, read N- to C-terminus: Putative clathrin assembly protein At1g14686 (339 aa).

The region spanning 16–148 is the ENTH domain; sequence SLIAADDILT…ILFHDGNRHR (133 aa). The interval 283 to 307 is disordered; that stretch reads ESSEESAERTEIAEEEEEEEEEIET. Residues 295–305 are compositionally biased toward acidic residues; sequence AEEEEEEEEEI.

Its subcellular location is the membrane. The protein resides in the clathrin-coated pit. The protein localises to the golgi apparatus. It localises to the cytoplasmic vesicle. It is found in the clathrin-coated vesicle. This Arabidopsis thaliana (Mouse-ear cress) protein is Putative clathrin assembly protein At1g14686.